The chain runs to 439 residues: Ribosomal protein uS12 methylthiotransferase RimO (439 aa).

The 113-residue stretch at Lys3 to Gly115 folds into the MTTase N-terminal domain. [4Fe-4S] cluster-binding residues include Cys12, Cys46, Cys78, Cys147, Cys151, and Cys154. Residues Thr133–Ala362 form the Radical SAM core domain.

This sequence belongs to the methylthiotransferase family. RimO subfamily. [4Fe-4S] cluster is required as a cofactor.

The protein localises to the cytoplasm. It catalyses the reaction L-aspartate(89)-[ribosomal protein uS12]-hydrogen + (sulfur carrier)-SH + AH2 + 2 S-adenosyl-L-methionine = 3-methylsulfanyl-L-aspartate(89)-[ribosomal protein uS12]-hydrogen + (sulfur carrier)-H + 5'-deoxyadenosine + L-methionine + A + S-adenosyl-L-homocysteine + 2 H(+). In terms of biological role, catalyzes the methylthiolation of an aspartic acid residue of ribosomal protein uS12. The protein is Ribosomal protein uS12 methylthiotransferase RimO of Wolinella succinogenes (strain ATCC 29543 / DSM 1740 / CCUG 13145 / JCM 31913 / LMG 7466 / NCTC 11488 / FDC 602W) (Vibrio succinogenes).